A 343-amino-acid polypeptide reads, in one-letter code: MNKRINEVSGRPIGEYLSRDISDFQRVSRTLFECFSSLATGATLNSQQLQQIQLPIDQISNNATPNMVLQLMNHLIDVDKIYQNTLKKLEKHQKIQKEITEIQKEIEEKDKLISTLALNLKDIESFLENELSQDNVNINNGNASDGIVNEVLIDLKQPDDAASMDNIVNREVSPEDLISYAHKISGTTSAPFGYQPNAPLASLFKPPAPQDEMMRSSVLFTKPPPHVLKYYGLAEIDVTTPTMAANISSPFSIGGNVGDVTTPTSKEQEDQQQQQQQQQPQQQLSQSQQSQQQTESELQPIQSILQPPQQLNIDLDLNPDLDSSGDDDDEDDDDEESEEVEWD.

Positions 86 to 125 form a coiled coil; it reads LKKLEKHQKIQKEITEIQKEIEEKDKLISTLALNLKDIES. A disordered region spans residues 247–343; that stretch reads ISSPFSIGGN…DEESEEVEWD (97 aa). Over residues 271–316 the composition is skewed to low complexity; it reads QQQQQQQQQPQQQLSQSQQSQQQTESELQPIQSILQPPQQLNIDLD. Residues 317–343 are compositionally biased toward acidic residues; it reads LNPDLDSSGDDDDEDDDDEESEEVEWD.

Belongs to the Mediator complex subunit 4 family. In terms of assembly, component of the Mediator complex.

The protein resides in the nucleus. Component of the Mediator complex, a coactivator involved in the regulated transcription of nearly all RNA polymerase II-dependent genes. Mediator functions as a bridge to convey information from gene-specific regulatory proteins to the basal RNA polymerase II transcription machinery. Mediator is recruited to promoters by direct interactions with regulatory proteins and serves as a scaffold for the assembly of a functional preinitiation complex with RNA polymerase II and the general transcription factors. The chain is Putative mediator of RNA polymerase II transcription subunit 4 (med4) from Dictyostelium discoideum (Social amoeba).